A 175-amino-acid polypeptide reads, in one-letter code: Di-N-acetylchitobiase (175 aa).

The signal sequence occupies residues 1–38; sequence MARLQLAGSRRLVPLPRRAPRLAPLLLPLLLALPDGAR. In terms of domain architecture, GH18 spans 39–175; sequence ADCPCKVPAL…SFHHEIKGSQ (137 aa). N-linked (GlcNAc...) asparagine glycosylation is present at Asn115. Residue Glu143 is the Proton donor of the active site.

The protein belongs to the glycosyl hydrolase 18 family.

The protein localises to the lysosome. In terms of biological role, involved in the degradation of asparagine-linked glycoproteins. Hydrolyze of N-acetyl-beta-D-glucosamine (1-4)N-acetylglucosamine chitobiose core from the reducing end of the bond, it requires prior cleavage by glycosylasparaginase. The protein is Di-N-acetylchitobiase (CTBS) of Bos taurus (Bovine).